The primary structure comprises 72 residues: UPF0270 protein plu0398 (72 aa).

This sequence belongs to the UPF0270 family.

This Photorhabdus laumondii subsp. laumondii (strain DSM 15139 / CIP 105565 / TT01) (Photorhabdus luminescens subsp. laumondii) protein is UPF0270 protein plu0398.